Consider the following 246-residue polypeptide: UDP-2,3-diacylglucosamine hydrolase (246 aa).

Mn(2+) is bound by residues Asp-8, His-10, Asp-41, Asn-79, and His-114. 79–80 (NR) contacts substrate. Residues Asp-122, Ser-160, Asn-164, Lys-167, and His-195 each contribute to the substrate site. Residues His-195 and His-197 each coordinate Mn(2+).

It belongs to the LpxH family. The cofactor is Mn(2+).

It is found in the cell inner membrane. It carries out the reaction UDP-2-N,3-O-bis[(3R)-3-hydroxytetradecanoyl]-alpha-D-glucosamine + H2O = 2-N,3-O-bis[(3R)-3-hydroxytetradecanoyl]-alpha-D-glucosaminyl 1-phosphate + UMP + 2 H(+). The protein operates within glycolipid biosynthesis; lipid IV(A) biosynthesis; lipid IV(A) from (3R)-3-hydroxytetradecanoyl-[acyl-carrier-protein] and UDP-N-acetyl-alpha-D-glucosamine: step 4/6. In terms of biological role, hydrolyzes the pyrophosphate bond of UDP-2,3-diacylglucosamine to yield 2,3-diacylglucosamine 1-phosphate (lipid X) and UMP by catalyzing the attack of water at the alpha-P atom. Involved in the biosynthesis of lipid A, a phosphorylated glycolipid that anchors the lipopolysaccharide to the outer membrane of the cell. In Chromohalobacter salexigens (strain ATCC BAA-138 / DSM 3043 / CIP 106854 / NCIMB 13768 / 1H11), this protein is UDP-2,3-diacylglucosamine hydrolase.